A 175-amino-acid chain; its full sequence is 3-hydroxydecanoyl-[acyl-carrier-protein] dehydratase (175 aa).

Residue His-71 is part of the active site.

The protein belongs to the thioester dehydratase family. FabA subfamily. In terms of assembly, homodimer.

It localises to the cytoplasm. It catalyses the reaction a (3R)-hydroxyacyl-[ACP] = a (2E)-enoyl-[ACP] + H2O. The catalysed reaction is (3R)-hydroxydecanoyl-[ACP] = (2E)-decenoyl-[ACP] + H2O. It carries out the reaction (2E)-decenoyl-[ACP] = (3Z)-decenoyl-[ACP]. It participates in lipid metabolism; fatty acid biosynthesis. Its function is as follows. Necessary for the introduction of cis unsaturation into fatty acids. Catalyzes the dehydration of (3R)-3-hydroxydecanoyl-ACP to E-(2)-decenoyl-ACP and then its isomerization to Z-(3)-decenoyl-ACP. Can catalyze the dehydratase reaction for beta-hydroxyacyl-ACPs with saturated chain lengths up to 16:0, being most active on intermediate chain length. The polypeptide is 3-hydroxydecanoyl-[acyl-carrier-protein] dehydratase (Rhodopseudomonas palustris (strain BisB5)).